Consider the following 112-residue polypeptide: Large ribosomal subunit protein eL30z (112 aa).

This sequence belongs to the eukaryotic ribosomal protein eL30 family.

The protein is Large ribosomal subunit protein eL30z (RPL30A) of Arabidopsis thaliana (Mouse-ear cress).